A 66-amino-acid chain; its full sequence is Large ribosomal subunit protein bL35 (66 aa).

Residues 1–26 (MPKMKTHRGAAKRVKRTASGKLKRSR) show a composition bias toward basic residues. Residues 1 to 49 (MPKMKTHRGAAKRVKRTASGKLKRSRAFTSHLFANKSTKQKRKLRKASL) are disordered.

It belongs to the bacterial ribosomal protein bL35 family.

This is Large ribosomal subunit protein bL35 from Staphylococcus carnosus (strain TM300).